The sequence spans 251 residues: Imidazole glycerol phosphate synthase subunit HisF (251 aa).

Active-site residues include Asp12 and Asp131.

Belongs to the HisA/HisF family. As to quaternary structure, heterodimer of HisH and HisF.

It is found in the cytoplasm. It catalyses the reaction 5-[(5-phospho-1-deoxy-D-ribulos-1-ylimino)methylamino]-1-(5-phospho-beta-D-ribosyl)imidazole-4-carboxamide + L-glutamine = D-erythro-1-(imidazol-4-yl)glycerol 3-phosphate + 5-amino-1-(5-phospho-beta-D-ribosyl)imidazole-4-carboxamide + L-glutamate + H(+). Its pathway is amino-acid biosynthesis; L-histidine biosynthesis; L-histidine from 5-phospho-alpha-D-ribose 1-diphosphate: step 5/9. In terms of biological role, IGPS catalyzes the conversion of PRFAR and glutamine to IGP, AICAR and glutamate. The HisF subunit catalyzes the cyclization activity that produces IGP and AICAR from PRFAR using the ammonia provided by the HisH subunit. The sequence is that of Imidazole glycerol phosphate synthase subunit HisF from Helicobacter hepaticus (strain ATCC 51449 / 3B1).